A 575-amino-acid polypeptide reads, in one-letter code: MPHVITQSCCNDASCVFACPVNCIHPTPDEPGFATSEMLYIDPVACVDCGACVTACPVSAIAPNTRLDFEQLPFVEINASYYPKRPAGVKLAPTSKLAPVTPAAEVRVRRQPLTVAVVGSGPAAMYAADELLVQQGVQVNVFEKLPTPYGLVRSGVAPDHQNTKRVTRLFDRIAGHRRFRFYLNVEIGKHLGHAELLAHHHAVLYAVGAPDDRRLTIDGMGLPGTGTATELVAWLNGHPDFNDLPVDLSHERVVIIGNGNVALDVARVLAADPHELAATDIADHALSALRNSAVREVVVAARRGPAHSAFTLPELIGLTAGADVVLDPGDHQRVLDDLAIVADPLTRNKLEILSTLGDGSAPARRVGRPRIRLAYRLTPRRVLGQRRAGGVQFSVTGTDELRQLDAGLVLTSIGYRGKPIPDLPFDEQAALVPNDGGRVIDPGTGEPVPGAYVAGWIKRGPTGFIGTNKSCSMQTVQALVADFNDGRLTDPVATPTALDQLVQARQPQAIGCAGWRAIDAAEIARGSADGRVRNKFTDVAEMLAAATSAPKEPLRRRVLARLRDLGQPIVLTVPL.

4Fe-4S ferredoxin-type domains are found at residues 2–29 (PHVI…PTPD) and 37–66 (EMLY…PNTR). Residues cysteine 9, cysteine 15, cysteine 19, cysteine 46, cysteine 49, cysteine 52, and cysteine 56 each contribute to the [4Fe-4S] cluster site. The segment at 115–575 (VAVVGSGPAA…GQPIVLTVPL (461 aa)) is ferredoxin--NADP reductase. The FAD site is built by alanine 123, glutamate 143, leucine 151, and isoleucine 187. Residues arginine 213, 258 to 261 (NGNV), 302 to 303 (RR), and glutamate 314 contribute to the NADP(+) site. FAD-binding positions include tryptophan 456 and 463–465 (GFI). Glycine 463 is an NADP(+) binding site.

It in the C-terminal section; belongs to the ferredoxin--NADP reductase family. The cofactor is [4Fe-4S] cluster. It depends on FAD as a cofactor.

It carries out the reaction 2 reduced [2Fe-2S]-[ferredoxin] + NADP(+) + H(+) = 2 oxidized [2Fe-2S]-[ferredoxin] + NADPH. The sequence is that of Probable ferredoxin/ferredoxin--NADP reductase (fprB) from Mycobacterium bovis (strain ATCC BAA-935 / AF2122/97).